Here is a 434-residue protein sequence, read N- to C-terminus: Enolase (434 aa).

Q167 is a (2R)-2-phosphoglycerate binding site. E209 acts as the Proton donor in catalysis. 3 residues coordinate Mg(2+): D246, E291, and D318. Residues K343, R372, S373, and K394 each contribute to the (2R)-2-phosphoglycerate site. K343 serves as the catalytic Proton acceptor.

This sequence belongs to the enolase family. In terms of assembly, component of the RNA degradosome, a multiprotein complex involved in RNA processing and mRNA degradation. Requires Mg(2+) as cofactor.

Its subcellular location is the cytoplasm. The protein resides in the secreted. It localises to the cell surface. It carries out the reaction (2R)-2-phosphoglycerate = phosphoenolpyruvate + H2O. It participates in carbohydrate degradation; glycolysis; pyruvate from D-glyceraldehyde 3-phosphate: step 4/5. In terms of biological role, catalyzes the reversible conversion of 2-phosphoglycerate (2-PG) into phosphoenolpyruvate (PEP). It is essential for the degradation of carbohydrates via glycolysis. This chain is Enolase, found in Buchnera aphidicola subsp. Acyrthosiphon pisum (strain APS) (Acyrthosiphon pisum symbiotic bacterium).